A 692-amino-acid chain; its full sequence is Glycine--tRNA ligase beta subunit (692 aa).

This sequence belongs to the class-II aminoacyl-tRNA synthetase family. In terms of assembly, tetramer of two alpha and two beta subunits.

The protein localises to the cytoplasm. The catalysed reaction is tRNA(Gly) + glycine + ATP = glycyl-tRNA(Gly) + AMP + diphosphate. This chain is Glycine--tRNA ligase beta subunit, found in Oceanobacillus iheyensis (strain DSM 14371 / CIP 107618 / JCM 11309 / KCTC 3954 / HTE831).